The sequence spans 174 residues: Flavodoxin (174 aa).

The region spanning 4-165 (VGLFYGSDTG…RVEKWCKQIY (162 aa)) is the Flavodoxin-like domain.

The protein belongs to the flavodoxin family. The cofactor is FMN.

Functionally, low-potential electron donor to a number of redox enzymes. The protein is Flavodoxin (fldA) of Haemophilus influenzae (strain ATCC 51907 / DSM 11121 / KW20 / Rd).